Reading from the N-terminus, the 169-residue chain is Peptide deformylase (169 aa).

The Fe cation site is built by C91 and H133. E134 is an active-site residue. H137 contacts Fe cation.

Belongs to the polypeptide deformylase family. Fe(2+) is required as a cofactor.

The enzyme catalyses N-terminal N-formyl-L-methionyl-[peptide] + H2O = N-terminal L-methionyl-[peptide] + formate. Functionally, removes the formyl group from the N-terminal Met of newly synthesized proteins. Requires at least a dipeptide for an efficient rate of reaction. N-terminal L-methionine is a prerequisite for activity but the enzyme has broad specificity at other positions. The protein is Peptide deformylase of Pectobacterium atrosepticum (strain SCRI 1043 / ATCC BAA-672) (Erwinia carotovora subsp. atroseptica).